The primary structure comprises 163 residues: Small ribosomal subunit protein uS5 (163 aa).

An S5 DRBM domain is found at 8–71 (LIEKIVDLNR…ERAKKGMVQV (64 aa)).

Belongs to the universal ribosomal protein uS5 family. As to quaternary structure, part of the 30S ribosomal subunit. Contacts proteins S4 and S8.

In terms of biological role, with S4 and S12 plays an important role in translational accuracy. Its function is as follows. Located at the back of the 30S subunit body where it stabilizes the conformation of the head with respect to the body. The chain is Small ribosomal subunit protein uS5 from Oleidesulfovibrio alaskensis (strain ATCC BAA-1058 / DSM 17464 / G20) (Desulfovibrio alaskensis).